Reading from the N-terminus, the 702-residue chain is DnaJ homolog subfamily C member 14 (702 aa).

2 disordered regions span residues 1–148 and 165–229; these read MAQK…GGNG and DELE…KRSQ. Residues 75–84 show a composition bias toward pro residues; the sequence is HGPPGGPGPP. Acidic residues predominate over residues 88-103; that stretch reads EDPDQSETSSEEESGV. Positions 113 to 133 are enriched in polar residues; sequence TGNQKDGNSFLSIPSACNCQG. Residues 165 to 175 are compositionally biased toward acidic residues; that stretch reads DELEEEYDDEE. Over residues 192–201 the composition is skewed to basic residues; that stretch reads PPSRRQRHRF. The span at 202 to 217 shows a compositional bias: basic and acidic residues; sequence PTKEDTREGGRRDPRS. Residues 218-227 show a composition bias toward basic residues; that stretch reads PGRHRLGRKR. 3 helical membrane passes run 250–270, 300–320, and 326–346; these read AGFWWLIELLVLVGEYVETCG, GWAQVMFQFLSQGFYCGVGLF, and LLGALLLLALALFLGFLQLGW. The 65-residue stretch at 443–507 folds into the J domain; it reads NPFHVLGVEA…EKRKEYEMKR (65 aa). The disordered stretch occupies residues 658-702; that stretch reads MPNGNFFAAPQPAPGAAAASKPNSTVPKGEAKPKRRKKVRRPFQR. A compositionally biased stretch (low complexity) spans 659 to 676; sequence PNGNFFAAPQPAPGAAAA. Basic residues predominate over residues 690-702; the sequence is PKRRKKVRRPFQR.

In terms of assembly, interacts with the FxxxFxxxF motif of DRD1 via its C-terminal domain. Highly expressed in pancreas and selectively expressed in brain, lung, liver, skeletal muscle and kidney.

It is found in the endoplasmic reticulum membrane. In terms of biological role, regulates the export of target proteins, such as DRD1, from the endoplasmic reticulum to the cell surface. The sequence is that of DnaJ homolog subfamily C member 14 (DNAJC14) from Homo sapiens (Human).